A 1058-amino-acid polypeptide reads, in one-letter code: Probable plasma membrane ATPase (1058 aa).

Polar residues predominate over residues 1-29; that stretch reads MDNNQIPKNSPESSAINSAESSPKSNVSS. Residues 1–123 are disordered; that stretch reads MDNNQIPKNS…SSSGKKEEDY (123 aa). At 1-212 the chain is on the cytoplasmic side; sequence MDNNQIPKNS…DVKRYPILEF (212 aa). Residues 31 to 40 show a composition bias toward basic and acidic residues; sequence VLHENHHKEQ. Low complexity predominate over residues 41 to 66; the sequence is QQLQQQLQQEQQQQQLPTTPQSEPTQ. The span at 96–111 shows a compositional bias: polar residues; it reads SLKTISGYPSSKNTEA. The chain crosses the membrane as a helical span at residues 213–232; the sequence is LYFMWNPLSWTMEVAAIVSI. The Extracellular portion of the chain corresponds to 233-237; that stretch reads ALLDW. The chain crosses the membrane as a helical span at residues 238 to 258; sequence VDFILICALLLLNATIGFIEE. Residues 259–387 lie on the Cytoplasmic side of the membrane; it reads NTAGNAVEAL…GHLQVILRNI (129 aa). Residues 388–407 form a helical membrane-spanning segment; sequence GLFCISFIAIWVLVELLVDF. The Extracellular segment spans residues 408 to 425; the sequence is LGYDGYCHGVGGGRCLPL. Residues 426-447 form a helical membrane-spanning segment; it reads NNALVLLVGGIPIAMPTVLSVT. Residues 448–783 are Cytoplasmic-facing; sequence MAIGATQLSK…SSRKIFQRMR (336 aa). Asp480 acts as the 4-aspartylphosphate intermediate in catalysis. Residues Asp728 and Asp732 each contribute to the Mg(2+) site. Residues 784–805 form a helical membrane-spanning segment; that stretch reads NYVIYSVAATVRICTTFGILTV. At 806–810 the chain is on the extracellular side; it reads AWNFK. The helical transmembrane segment at 811 to 833 threads the bilayer; it reads FPTIATVIIAILNDGTMLTISKD. The Cytoplasmic segment spans residues 834-849; it reads RVRARNEPDQWNLFEV. A helical transmembrane segment spans residues 850–870; the sequence is FTMALCYGFYLVGSTIVFFAI. The Extracellular segment spans residues 871–889; sequence IHDGTWFHDAINLRILTDN. A helical transmembrane segment spans residues 890–910; sequence ELRGLIYLQVSISGLATIFVS. At 911-922 the chain is on the cytoplasmic side; sequence RSQGFSYFERPG. A helical transmembrane segment spans residues 923 to 943; that stretch reads NLVIFAFVMSQIVATFIGVYG. Residues 944–967 lie on the Extracellular side of the membrane; that stretch reads FRGYPHDSFSDNPDYPVHGTNFQG. The helical transmembrane segment at 968–988 threads the bilayer; that stretch reads CGWGWAVCAWIWCFLWYIPMD. Residues 989 to 1058 are Cytoplasmic-facing; that stretch reads FIKLGVTYIL…HKSVVTDNKV (70 aa).

This sequence belongs to the cation transport ATPase (P-type) (TC 3.A.3) family. Type IIIA subfamily.

It localises to the cell membrane. It carries out the reaction ATP + H2O + H(+)(in) = ADP + phosphate + 2 H(+)(out). Its activity is regulated as follows. Acid pH levels increase its ATPase activity. Functionally, P-type plasma membrane H+-ATPase (proton pump). The proton gradient it generates drives the active transport of nutrients by H(+) symport. The resulting external acidification and/or internal alkinization may mediate growth responses. The chain is Probable plasma membrane ATPase (patB) from Dictyostelium discoideum (Social amoeba).